The sequence spans 289 residues: Phosphatidylglycerol--prolipoprotein diacylglyceryl transferase (289 aa).

The next 4 membrane-spanning stretches (helical) occupy residues 18 to 38 (FTIYWYGVLIGLGVIIGYVMA), 54 to 74 (DFVMYVIPVAIIFARLYYVIF), 86 to 106 (VFYIWEGGLAIHGALIGGVLT), and 116 to 136 (LSFWQLMDVAAPSILIGQAIG). Residue Arg137 participates in a 1,2-diacyl-sn-glycero-3-phospho-(1'-sn-glycerol) binding. 3 helical membrane-spanning segments follow: residues 177–197 (HPTFLYESIWNFIGVVVLLLL), 205–225 (GELFFSYLIWYSIGRFFIEGM), and 236–256 (LRTAQIVSILLIVGALLLWWY).

The protein belongs to the Lgt family.

It is found in the cell membrane. It carries out the reaction L-cysteinyl-[prolipoprotein] + a 1,2-diacyl-sn-glycero-3-phospho-(1'-sn-glycerol) = an S-1,2-diacyl-sn-glyceryl-L-cysteinyl-[prolipoprotein] + sn-glycerol 1-phosphate + H(+). The protein operates within protein modification; lipoprotein biosynthesis (diacylglyceryl transfer). Functionally, catalyzes the transfer of the diacylglyceryl group from phosphatidylglycerol to the sulfhydryl group of the N-terminal cysteine of a prolipoprotein, the first step in the formation of mature lipoproteins. The chain is Phosphatidylglycerol--prolipoprotein diacylglyceryl transferase from Halalkalibacterium halodurans (strain ATCC BAA-125 / DSM 18197 / FERM 7344 / JCM 9153 / C-125) (Bacillus halodurans).